The following is a 309-amino-acid chain: Taste receptor type 2 member 31 (309 aa).

Topologically, residues 1–2 are extracellular; that stretch reads MT. The helical transmembrane segment at 3 to 23 threads the bilayer; it reads TFIPIIFSSVVVVLFVIGNFA. At 24–55 the chain is on the cytoplasmic side; that stretch reads NGFIALVNSIERVKRQKISFADQILTALAVSR. Residues 56–76 traverse the membrane as a helical segment; that stretch reads VGLLWVLLLNWYSTVFNPAFY. The Extracellular portion of the chain corresponds to 77-100; sequence SVEVRTTAYNVWAVTGHFSNWLAT. The helical transmembrane segment at 101–121 threads the bilayer; that stretch reads SLSIFYLLKIANFSNLIFLHL. Residues 122–126 lie on the Cytoplasmic side of the membrane; that stretch reads KRRVK. A helical membrane pass occupies residues 127–147; that stretch reads SVILVMLLGPLLFLACQLFVI. Over 148–181 the chain is Extracellular; it reads NMKEIVRTKEYEGNLTWKIKLRSAVYLSDATVTT. N161 carries an N-linked (GlcNAc...) asparagine glycan. A helical transmembrane segment spans residues 182-202; sequence LGNLVPFTLTLLCFLLLICSL. The Cytoplasmic portion of the chain corresponds to 203 to 229; it reads CKHLKKMQLHGKGSQDPSTKVHIKALQ. Residues 230-250 form a helical membrane-spanning segment; it reads TVIFFLLLCAVYFLSIMISVW. Residues 251–259 are Extracellular-facing; that stretch reads SFGSLENKP. Residues 260–280 form a helical membrane-spanning segment; it reads VFMFCKAIRFSYPSIHPFILI. At 281 to 309 the chain is on the cytoplasmic side; it reads WGNKKLKQTFLSVLRQVRYWVKGEKPSSP.

Belongs to the G-protein coupled receptor T2R family. As to expression, expressed in subsets of taste receptor cells of the tongue and exclusively in gustducin-positive cells.

Its subcellular location is the membrane. Its function is as follows. Receptor that may play a role in the perception of bitterness and is gustducin-linked. May play a role in sensing the chemical composition of the gastrointestinal content. The activity of this receptor may stimulate alpha gustducin, mediate PLC-beta-2 activation and lead to the gating of TRPM5. Activated by the sulfonyl amide sweeteners saccharin and acesulfame K. The protein is Taste receptor type 2 member 31 (TAS2R31) of Homo sapiens (Human).